We begin with the raw amino-acid sequence, 375 residues long: Trichodiene synthase (375 aa).

This sequence belongs to the trichodiene synthase family.

The enzyme catalyses (2E,6E)-farnesyl diphosphate = trichodiene + diphosphate. It functions in the pathway sesquiterpene biosynthesis; trichothecene biosynthesis. TS is a member of the terpene cyclase group of enzymes. It catalyzes the isomerization and cyclization of farnesyl pyro-phosphate to form trichodiene, the first cyclic intermediate in the biosynthetic pathway for trichothecenes. It serves to branch trichothecene biosynthesis from the isoprenoid pathway. The chain is Trichodiene synthase (TRI5) from Fusarium culmorum.